Here is a 311-residue protein sequence, read N- to C-terminus: Protease HtpX homolog 1 (311 aa).

Helical transmembrane passes span 12–32 and 35–55; these read IIAL…IINF and FPVI…WLIS. Histidine 137 serves as a coordination point for Zn(2+). The active site involves glutamate 138. Histidine 141 contributes to the Zn(2+) binding site. 2 helical membrane passes run 159–179 and 184–204; these read ILGF…IFAV and ILVG…TFFL. A Zn(2+)-binding site is contributed by glutamate 216.

It belongs to the peptidase M48B family. Zn(2+) is required as a cofactor.

It is found in the cell membrane. The sequence is that of Protease HtpX homolog 1 from Sulfurisphaera tokodaii (strain DSM 16993 / JCM 10545 / NBRC 100140 / 7) (Sulfolobus tokodaii).